The sequence spans 572 residues: Glutathione hydrolase 1 (572 aa).

A signal peptide spans 1-22 (MSLVRTVTIVLFIIAFLQNAAA). Residue R99 coordinates L-glutamate. 2 N-linked (GlcNAc...) asparagine glycosylation sites follow: N171 and N222. T368 serves as the catalytic Nucleophile. Residues T386, N388, E407, D410, 440 to 441 (SS), and 461 to 462 (GG) each bind L-glutamate. N505 carries N-linked (GlcNAc...) asparagine glycosylation. Positions 552–572 (GGRSELVAVSDPRKGGFPSGY) are disordered.

This sequence belongs to the gamma-glutamyltransferase family. In terms of tissue distribution, expressed in embryo, roots and leaves. In mature plants, expression is restricted to vascular tissues of roots, leaves, flowers and siliques.

The protein resides in the secreted. The protein localises to the extracellular space. It is found in the apoplast. The catalysed reaction is an N-terminal (5-L-glutamyl)-[peptide] + an alpha-amino acid = 5-L-glutamyl amino acid + an N-terminal L-alpha-aminoacyl-[peptide]. The enzyme catalyses glutathione + H2O = L-cysteinylglycine + L-glutamate. It catalyses the reaction an S-substituted glutathione + H2O = an S-substituted L-cysteinylglycine + L-glutamate. The protein operates within sulfur metabolism; glutathione metabolism. In terms of biological role, may play a role in preventing oxidative stress by metabolizing extracellular oxidized glutathione (GSSG). The protein is Glutathione hydrolase 1 (GGT1) of Arabidopsis thaliana (Mouse-ear cress).